Reading from the N-terminus, the 93-residue chain is YcgL domain-containing protein Swoo_2115 (93 aa).

In terms of domain architecture, YcgL spans 1–85 (MICAVYKSRR…PVVNLLEEHK (85 aa)).

The chain is YcgL domain-containing protein Swoo_2115 from Shewanella woodyi (strain ATCC 51908 / MS32).